Consider the following 635-residue polypeptide: Protein MICRORCHIDIA 1 (635 aa).

The tract at residues 491–511 (RTVIPDQPPTVNTYNPSPLPS) is disordered. A coiled-coil region spans residues 588-635 (MRCEEYVKKENEVEQTVKSLEKELEEIKSKCAQLALLVDAKKKEMQQV).

This sequence belongs to the MORC ATPase protein family. In terms of assembly, homodimer and heterodimer with MORC6. Component of an RNA-directed DNA methylation (RdDM) complex that contains at least MORC6, MORC1/CRT1, MORC2, SWI3D and SUVH9. Binds directly to SUVH2 and SUVH9. Interacts with the resistance proteins RCY1, RPM1, SNC1, RPP8, SSI4 and RPS2. The interactions with various resistance proteins are disrupted when these resistance proteins are activated. Interacts with the PAMP recognition receptor FLS2. Mg(2+) is required as a cofactor. Mn(2+) serves as cofactor. In terms of tissue distribution, expressed constitutively.

It localises to the nucleus. The protein localises to the endosome. Mediator of defense signaling triggered by distinct classes of R proteins. Required during hypersensitive response (HR) that confers disease resistance to turnip crinkle virus (TCV). Exhibits ATPase activity. Contributes to resistance against Pseudomonas syringae and Hyaloperonospora arabidopsidis, at early stages prior to cytosolic calcium ions Ca(2+) accumulation. Required for pathogen-associated molecular pattern (PAMP)-triggered immunity (PTI), basal resistance, non-host resistance and systemic acquired resistance (SAR). Binds DNA/RNA in a non-specific manner and exhibits endonuclease activity. Probably involved in DNA repair. Required for both RPP8- and SSI4-mediated resistance responses, thus being involved in both TIR- and CC-NB-LRR pathways. Involved in RNA-directed DNA methylation (RdDM) as a component of the RdDM machinery and required for gene silencing. May also be involved in the regulation of chromatin architecture to maintain gene silencing. The chain is Protein MICRORCHIDIA 1 from Arabidopsis thaliana (Mouse-ear cress).